The sequence spans 142 residues: UPF0275 protein PM0505 (142 aa).

It belongs to the UPF0275 family.

This chain is UPF0275 protein PM0505, found in Pasteurella multocida (strain Pm70).